The chain runs to 1388 residues: Rho-associated protein kinase 2 (1388 aa).

Residues 1–26 (MSRPPPTGKMPGAPEAAPGDGAGAGR) are disordered. The region spanning 92 to 354 (YDVVKVIGRG…VEEIKQHPFF (263 aa)) is the Protein kinase domain. ATP contacts are provided by residues 98 to 106 (IGRGAFGEV) and Lys-121. The active-site Proton acceptor is the Asp-214. The AGC-kinase C-terminal domain maps to 357–425 (DQWNWDNIRE…FRENLLLSDS (69 aa)). The interval 363–784 (NIRETAAPVV…LNELLKQKDV (422 aa)) is interaction with PPP1R12A. The segment at 373–420 (PELSSDIDSSNFDDIEDDKGDVETFPIPKAFVGNQLPFIGFTYFRENL) is interaction with NPM1. Phosphothreonine; by ROCK2 is present on Thr-414. The stretch at 439–1131 (SEESQEIQKK…QLQALHIGMD (693 aa)) forms a coiled coil. Residues 497–573 (TLRQLEREKA…LDEANALLRT (77 aa)) form the REM-1 domain. A compositionally biased stretch (basic and acidic residues) spans 512–530 (NAEYQRKADHEADKKRNLE). The tract at residues 512 to 532 (NAEYQRKADHEADKKRNLEND) is disordered. Tyr-722 is modified (phosphotyrosine; by SRC). The RhoBD domain maps to 979–1047 (TSDVANLANE…LAEIMNRKEP (69 aa)). Positions 979-1047 (TSDVANLANE…LAEIMNRKEP (69 aa)) are RHOA binding. Position 1137 is a phosphoserine (Ser-1137). Residues 1150 to 1349 (ESRLEGWLSL…WVSRLVKKIP (200 aa)) enclose the PH domain. Thr-1212 is modified (phosphothreonine). Residues 1260 to 1315 (GHEFIPTLYHFPTNCEACMKPLWHMFKPPPALECRRCHIKCHKDHMDKKEEIIAPC) form a Phorbol-ester/DAG-type zinc finger. The tract at residues 1345 to 1388 (VKKIPKKPPAPDPFARSSPRTSMKIQQNQSIRRPSRQLAPNKPS) is disordered. 2 positions are modified to phosphoserine: Ser-1362 and Ser-1374. Over residues 1362–1376 (SPRTSMKIQQNQSIR) the composition is skewed to polar residues.

Belongs to the protein kinase superfamily. AGC Ser/Thr protein kinase family. In terms of assembly, homodimer. Interacts with IRS1. Interacts with RAF1. Interacts with RHOA (activated by GTP), RHOB and RHOC. Interacts with PPP1R12A. Interacts with EP300. Interacts with CHORDC1. Interacts with BRCA2. Interacts with NPM1; this interaction enhances ROCK2 activity. Interacts with SORL1. Interacts with PJVK. The cofactor is Mg(2+). In terms of processing, autophosphorylated. Phosphorylation at Tyr-722 reduces its binding to RHOA and is crucial for focal adhesion dynamics. Dephosphorylation by PTPN11 stimulates its RHOA binding activity. Post-translationally, cleaved by granzyme B during apoptosis. This leads to constitutive activation of the kinase and membrane blebbing. Highly expressed in brain, heart, lung, liver, stomach, spleen, kidney, testis, muscle, embryo and placenta. Isoform 2 is expressed predominantly in the skeletal muscle.

It is found in the cytoplasm. It localises to the cell membrane. The protein localises to the nucleus. The protein resides in the cytoskeleton. Its subcellular location is the microtubule organizing center. It is found in the centrosome. It carries out the reaction L-seryl-[protein] + ATP = O-phospho-L-seryl-[protein] + ADP + H(+). It catalyses the reaction L-threonyl-[protein] + ATP = O-phospho-L-threonyl-[protein] + ADP + H(+). Its activity is regulated as follows. Activated by RHOA binding. Inhibited by Y-27632. Its function is as follows. Protein kinase which is a key regulator of actin cytoskeleton and cell polarity. Involved in regulation of smooth muscle contraction, actin cytoskeleton organization, stress fiber and focal adhesion formation, neurite retraction, cell adhesion and motility via phosphorylation of ADD1, BRCA2, CNN1, EZR, DPYSL2, EP300, MSN, MYL9/MLC2, NPM1, RDX, PPP1R12A and VIM. Phosphorylates SORL1 and IRF4. Acts as a negative regulator of VEGF-induced angiogenic endothelial cell activation. Positively regulates the activation of p42/MAPK1-p44/MAPK3 and of p90RSK/RPS6KA1 during myogenic differentiation. Plays an important role in the timely initiation of centrosome duplication. Inhibits keratinocyte terminal differentiation. May regulate closure of the eyelids and ventral body wall through organization of actomyosin bundles. Plays a critical role in the regulation of spine and synaptic properties in the hippocampus. Plays a role in placental homeostasis during the perinatal period. Plays an important role in generating the circadian rhythm of the aortic myofilament Ca(2+) sensitivity and vascular contractility by modulating the myosin light chain phosphorylation. This chain is Rho-associated protein kinase 2 (Rock2), found in Mus musculus (Mouse).